Reading from the N-terminus, the 492-residue chain is Chitooligosaccharide oxidase (492 aa).

A signal peptide spans 1-19 (MHFNTLTCVLVGLVAHTSA). Residues 57–229 (LPFEPAAIAV…VELEFQTFAA (173 aa)) enclose the FAD-binding PCMH-type domain. Residues 94–154 (HSYTSLGFGG…GKRALAHGTC (61 aa)) constitute a cross-link (6-(S-cysteinyl)-8alpha-(pros-histidyl)-FAD (His-Cys)).

It belongs to the oxygen-dependent FAD-linked oxidoreductase family. It depends on FAD as a cofactor. Post-translationally, the FAD cofactor is bound via a bicovalent 6-S-cysteinyl, 8alpha-N1-histidyl FAD linkage.

The protein resides in the secreted. The catalysed reaction is N,N'-diacetylchitobiose + O2 = N,N'-diacetylchitobiono-1,5-lactone + H2O2. The enzyme catalyses N,N',N''-triacetylchitotriose + O2 = N,N',N''-triacetylchitotriono-1,5-lactone + H2O2. It carries out the reaction N,N',N'',N'''-tetraacetylchitotetraose + O2 = N,N',N'',N'''-tetraacetylchitotetraono-1,5-lactone + H2O2. In terms of biological role, catalyzes the selective oxidation of C1 hydroxyl moieties on chitooligosaccharides with concomitant reduction of molecular oxygen to hydrogen peroxide. This results in the formation of the corresponding lactones, which typically undergo spontaneous hydrolysis. Chitooligosaccharides are homo- or heterooligomers of N-acetylglucosamine (GlcNAc) and D-glucosamine which are linked through beta-1,4-glycosidic bonds. For optimal substrate binding at least 2 GlcNAc units are needed, and chitooligosaccharide oxidase is most efficient on chitobiose, chitotriose and chitotetraose. The polypeptide is Chitooligosaccharide oxidase (Gibberella zeae (strain ATCC MYA-4620 / CBS 123657 / FGSC 9075 / NRRL 31084 / PH-1) (Wheat head blight fungus)).